The sequence spans 69 residues: uncharacterized protein (69 aa).

Positions 23-46 (AENEGNRKENRRQMQSRNERGCNV) are disordered. Positions 26-44 (EGNRKENRRQMQSRNERGC) are enriched in basic and acidic residues.

This is an uncharacterized protein from Homo sapiens (Human).